The chain runs to 415 residues: Serine hydroxymethyltransferase (415 aa).

(6S)-5,6,7,8-tetrahydrofolate-binding positions include Leu121 and 125 to 127 (GHL). Lys230 carries the N6-(pyridoxal phosphate)lysine modification.

Belongs to the SHMT family. As to quaternary structure, homodimer. The cofactor is pyridoxal 5'-phosphate.

It localises to the cytoplasm. The catalysed reaction is (6R)-5,10-methylene-5,6,7,8-tetrahydrofolate + glycine + H2O = (6S)-5,6,7,8-tetrahydrofolate + L-serine. It functions in the pathway one-carbon metabolism; tetrahydrofolate interconversion. Its pathway is amino-acid biosynthesis; glycine biosynthesis; glycine from L-serine: step 1/1. Its function is as follows. Catalyzes the reversible interconversion of serine and glycine with tetrahydrofolate (THF) serving as the one-carbon carrier. This reaction serves as the major source of one-carbon groups required for the biosynthesis of purines, thymidylate, methionine, and other important biomolecules. Also exhibits THF-independent aldolase activity toward beta-hydroxyamino acids, producing glycine and aldehydes, via a retro-aldol mechanism. This chain is Serine hydroxymethyltransferase, found in Syntrophomonas wolfei subsp. wolfei (strain DSM 2245B / Goettingen).